The following is a 365-amino-acid chain: Spermidine/putrescine import ATP-binding protein PotA (365 aa).

Positions 7 to 237 (LTLADITKRF…PNNLFVASFI (231 aa)) constitute an ABC transporter domain. An ATP-binding site is contributed by 39 to 46 (GPSGCGKT).

This sequence belongs to the ABC transporter superfamily. Spermidine/putrescine importer (TC 3.A.1.11.1) family. As to quaternary structure, the complex is composed of two ATP-binding proteins (PotA), two transmembrane proteins (PotB and PotC) and a solute-binding protein (PotD).

The protein resides in the cell inner membrane. The catalysed reaction is ATP + H2O + polyamine-[polyamine-binding protein]Side 1 = ADP + phosphate + polyamineSide 2 + [polyamine-binding protein]Side 1.. Part of the ABC transporter complex PotABCD involved in spermidine/putrescine import. Responsible for energy coupling to the transport system. The polypeptide is Spermidine/putrescine import ATP-binding protein PotA (Hahella chejuensis (strain KCTC 2396)).